Here is a 649-residue protein sequence, read N- to C-terminus: MAISCRQSRVLPMSLPLPLTIPLPLVLVLSLHLSGVCGVIDRLVVQTSSGPVRGRSVTVQGREVHVYTGIPYAKPPVEDLRFRKPVPAEPWHGVLDATGLSATCVQERYEYFPGFSGEEIWNPNTNVSEDCLYINVWAPAKARLRHGRGANGGEHPNGKQADTDHLIHNGNPQNTTNGLPILIWIYGGGFMTGSATLDIYNADIMAAVGNVIVASFQYRVGAFGFLHLAPEMPSEFAEEAPGNVGLWDQALAIRWLKDNAHAFGGNPEWMTLFGESAGSSSVNAQLMSPVTRGLVKRGMMQSGTMNAPWSHMTSEKAVEIGKALINDCNCNASMLKTNPAHVMSCMRSVDAKTISVQQWNSYSGILSFPSAPTIDGAFLPADPMTLMKTADLKDYDILMGNVRDEGTYFLLYDFIDYFDKDDATALPRDKYLEIMNNIFGKATQAEREAIIFQYTSWEGNPGYQNQQQIGRAVGDHFFTCPTNEYAQALAERGASVHYYYFTHRTSTSLWGEWMGVLHGDEIEYFFGQPLNNSLQYRPVERELGKRMLSAVIEFAKTGNPAQDGEEWPNFSKEDPVYYIFSTDDKIEKLARGPLAARCSFWNDYLPKVRSWAGTCDGDSGSASISPRLQLLGIAALIYICAALRTKRVF.

A signal peptide spans 1–38 (MAISCRQSRVLPMSLPLPLTIPLPLVLVLSLHLSGVCG). A disulfide bridge links C104 with C131. Residues N126 and N174 are each glycosylated (N-linked (GlcNAc...) asparagine). S276 serves as the catalytic Acyl-ester intermediate. Cysteines 330 and 345 form a disulfide. An N-linked (GlcNAc...) asparagine glycan is attached at N331. Active-site charge relay system residues include E405 and H518. A disulfide bridge links C480 with C598. Residue N531 is glycosylated (N-linked (GlcNAc...) asparagine). S619 is lipidated: GPI-anchor amidated serine. A propeptide spans 620–649 (GSASISPRLQLLGIAALIYICAALRTKRVF) (removed in mature form).

The protein belongs to the type-B carboxylesterase/lipase family. Homodimer; disulfide-linked. The active unit is formed by non-covalent association of the 55 kDa and 16 kDa subunits. Proteolytic cleavage into the 16 kDa subunit and the 55 kDa subunits originates from the hydrophilic peptide, aa 148-180, and is associated with excretion out of the cell. Post-translationally, neither N-glycosylation nor dimerization is required for enzyme activity or substrate specificity, but protects the protein against proteolytic digestion.

Its subcellular location is the synapse. It is found in the cell membrane. The catalysed reaction is acetylcholine + H2O = choline + acetate + H(+). Rapidly hydrolyzes choline released into the synapse. It can hydrolyze butyrylthiocholine. The polypeptide is Acetylcholinesterase (Ace) (Drosophila melanogaster (Fruit fly)).